The sequence spans 363 residues: D-alanine--D-alanine ligase (363 aa).

The ATP-grasp domain occupies 148–353 (KKLLAAEGLP…YGTLVSTLIE (206 aa)). 176 to 231 (RERLGLPVFVKPARAGSSIGITKVDDWAALDTAIAAAREHDPKVIVEAGIVGREVE) serves as a coordination point for ATP. Asp308, Glu320, and Asn322 together coordinate Mg(2+).

This sequence belongs to the D-alanine--D-alanine ligase family. The cofactor is Mg(2+). It depends on Mn(2+) as a cofactor.

It is found in the cytoplasm. The enzyme catalyses 2 D-alanine + ATP = D-alanyl-D-alanine + ADP + phosphate + H(+). It participates in cell wall biogenesis; peptidoglycan biosynthesis. Its function is as follows. Cell wall formation. The protein is D-alanine--D-alanine ligase of Nocardia farcinica (strain IFM 10152).